The chain runs to 44 residues: Large ribosomal subunit protein bL34 (44 aa).

A disordered region spans residues 1–26; that stretch reads MKMTFQPKKRQRAKVHGFRQRMKTAG. Positions 7–22 are enriched in basic residues; sequence PKKRQRAKVHGFRQRM.

This sequence belongs to the bacterial ribosomal protein bL34 family.

This is Large ribosomal subunit protein bL34 from Agathobacter rectalis (strain ATCC 33656 / DSM 3377 / JCM 17463 / KCTC 5835 / VPI 0990) (Eubacterium rectale).